Reading from the N-terminus, the 186-residue chain is Signal peptidase I P (186 aa).

At 1-15 the chain is on the cytoplasmic side; it reads MTKEKVFKKKSSILE. The helical transmembrane segment at 16–35 threads the bilayer; the sequence is WGKAIVIAVILALLIRNFLF. The Extracellular segment spans residues 36-186; it reads EPYVVEGKSM…FPFSNMRKAK (151 aa). Catalysis depends on residues S44 and K86.

Belongs to the peptidase S26 family.

It localises to the cell membrane. It carries out the reaction Cleavage of hydrophobic, N-terminal signal or leader sequences from secreted and periplasmic proteins.. The chain is Signal peptidase I P (sipP) from Bacillus subtilis subsp. natto.